The primary structure comprises 362 residues: 3-dehydroquinate synthase (362 aa).

Residues 71-76 (DGEQYK), 105-109 (GVIGD), 129-130 (TT), lysine 142, lysine 151, and 169-172 (CLKT) contribute to the NAD(+) site. Positions 184, 247, and 264 each coordinate Zn(2+).

This sequence belongs to the sugar phosphate cyclases superfamily. Dehydroquinate synthase family. Co(2+) serves as cofactor. Zn(2+) is required as a cofactor. The cofactor is NAD(+).

Its subcellular location is the cytoplasm. It carries out the reaction 7-phospho-2-dehydro-3-deoxy-D-arabino-heptonate = 3-dehydroquinate + phosphate. The protein operates within metabolic intermediate biosynthesis; chorismate biosynthesis; chorismate from D-erythrose 4-phosphate and phosphoenolpyruvate: step 2/7. Functionally, catalyzes the conversion of 3-deoxy-D-arabino-heptulosonate 7-phosphate (DAHP) to dehydroquinate (DHQ). This chain is 3-dehydroquinate synthase, found in Salmonella schwarzengrund (strain CVM19633).